A 79-amino-acid chain; its full sequence is Cell division protein ZapB (79 aa).

Positions 3–79 (LEVFEKLEAK…QALLGRMEEV (77 aa)) form a coiled coil. Residue Lys8 is modified to N6-acetyllysine. Residues 34–65 (NNSLSQEVQNAQHQREELERENNHLKEQQNGW) form a disordered region. Positions 35 to 45 (NSLSQEVQNAQ) are enriched in polar residues. The span at 46–60 (HQREELERENNHLKE) shows a compositional bias: basic and acidic residues.

The protein belongs to the ZapB family. Homodimer. The ends of the coiled-coil dimer bind to each other, forming polymers. Interacts with FtsZ.

It localises to the cytoplasm. Functionally, non-essential, abundant cell division factor that is required for proper Z-ring formation. It is recruited early to the divisome by direct interaction with FtsZ, stimulating Z-ring assembly and thereby promoting cell division earlier in the cell cycle. Its recruitment to the Z-ring requires functional FtsA or ZipA. This is Cell division protein ZapB from Shigella boydii serotype 18 (strain CDC 3083-94 / BS512).